The primary structure comprises 401 residues: Phosphoglycerate kinase (401 aa).

Substrate is bound by residues 20 to 22, arginine 35, 58 to 61, arginine 117, and arginine 154; these read DFN and HLGR. Residues lysine 204, glycine 298, glutamate 329, and 358-361 contribute to the ATP site; that span reads GGDS.

The protein belongs to the phosphoglycerate kinase family. As to quaternary structure, monomer.

It is found in the cytoplasm. The enzyme catalyses (2R)-3-phosphoglycerate + ATP = (2R)-3-phospho-glyceroyl phosphate + ADP. Its pathway is carbohydrate degradation; glycolysis; pyruvate from D-glyceraldehyde 3-phosphate: step 2/5. The polypeptide is Phosphoglycerate kinase (Bifidobacterium longum (strain DJO10A)).